We begin with the raw amino-acid sequence, 224 residues long: Ribosomal RNA large subunit methyltransferase E (224 aa).

Positions 64, 66, 97, 113, and 138 each coordinate S-adenosyl-L-methionine. The active-site Proton acceptor is the lysine 178.

Belongs to the class I-like SAM-binding methyltransferase superfamily. RNA methyltransferase RlmE family.

The protein resides in the cytoplasm. The catalysed reaction is uridine(2552) in 23S rRNA + S-adenosyl-L-methionine = 2'-O-methyluridine(2552) in 23S rRNA + S-adenosyl-L-homocysteine + H(+). Its function is as follows. Specifically methylates the uridine in position 2552 of 23S rRNA at the 2'-O position of the ribose in the fully assembled 50S ribosomal subunit. In Albidiferax ferrireducens (strain ATCC BAA-621 / DSM 15236 / T118) (Rhodoferax ferrireducens), this protein is Ribosomal RNA large subunit methyltransferase E.